A 500-amino-acid polypeptide reads, in one-letter code: Perfringolysin O (500 aa).

An N-terminal signal peptide occupies residues 1–28 (MIRFKKTKLIASIAMALCLFSQPVISFS). The next 4 membrane-spanning stretches (beta stranded) occupy residues 189–202 (KSQI…NAKV), 209–218 (VDFNAVANNE), 287–296 (SKDVQAAFKA), and 304–316 (KNSQ…YENS). The short motif at 458–468 (ECTGLAWEWWR) is the Conserved undecapeptide element. Residues 490-491 (TL) carry the Cholesterol binding motif.

It belongs to the cholesterol-dependent cytolysin family. As to quaternary structure, modeling based on cryo-EM shows a homooligomeric pore complex containing 38-44 subunits; when inserted in the host membrane.

It localises to the secreted. The protein resides in the host cell membrane. Its function is as follows. A cholesterol-dependent toxin that causes cytolysis by forming pores in cholesterol-containing host membranes. After binding to target membranes, the protein assembles into a pre-pore complex. A major conformational change leads to insertion in the host membrane and formation of an oligomeric pore complex. Cholesterol is required for binding to host cell membranes, membrane insertion and pore formation; cholesterol binding is mediated by a Thr-Leu pair in the C-terminus. Can be reversibly inactivated by oxidation. This Clostridium perfringens (strain 13 / Type A) protein is Perfringolysin O (pfo).